We begin with the raw amino-acid sequence, 142 residues long: Dynein light chain Tctex-type protein 2B (142 aa).

Belongs to the dynein light chain Tctex-type family. In terms of assembly, light chain of the cytoplasmic dynein complex 2, a multisubunit complex composed at least of eleven different proteins. The cytoplasmic dynein 2 complex consists of two catalytic heavy chains (HCs) and a number of non-catalytic subunits presented by intermediate chains (ICs), light intermediate chains (LICs) and light chains (LCs). Among them, a heavy chain (DYNC2H1), two intermediate chains (DYNC2I2 and DYNC2I1), a light intermediate chain (DYNC2LI1), and a light chain (DYNLT2B) are unique to the dynein-2 complex, but a subset of the light chains are also shared by dynein-1 and dynein-2 complexes. Interacts with DYNC2I1. The dimer DYNLT2B-DYNLT1/DYNLT3 interacts with DYNC2I1; this interaction is crucial for retrograde trafficking of ciliary proteins.

Its subcellular location is the dynein axonemal particle. Functionally, acts as one of several non-catalytic accessory components of the cytoplasmic dynein 2 complex (dynein-2 complex), a motor protein complex that drives the movement of cargos along microtubules within cilia and flagella in concert with the intraflagellar transport (IFT) system. Required for proper retrograde ciliary transport. In Homo sapiens (Human), this protein is Dynein light chain Tctex-type protein 2B.